Reading from the N-terminus, the 36-residue chain is Protein YibY (36 aa).

The sequence is that of Protein YibY from Escherichia coli (strain K12).